The primary structure comprises 646 residues: MEGAEKVKVVVRCRPISTTEKLQGHKIAVTCNDEEKAVNIKSLSQEDPPRTFYFDAVFSPNTDQMTVYNVAARPIVENVLKGYNGTIFAYGQTGTGKTFTMAGDLEPVEMRGIIPNSFAHIFDHIAKCQHDTTFLVRVSYLEIYNEEIRDLLSKDHNGNLEIKERPDVGVYVRNLSNPTVENASKMQALMEFGSKNRKVGATAMNLESSRSHAMFTVTIESCRNGLVTQGKLQLVDLAGSERQSKTGAQGERLKEAAKINLSLSTLGNVISSLVDGKSTHIPYRNSKLTRLLQDSLGGNSKTVMIANVGPATYNYDETLSTLRYANRAKNIQNVAKINEDPKDAQLRKFQLEIEALRKILDEENPGDDENQEEAWEAKMQEREVEMEKKRKILEERVNSAVNDEETHRLVKEMMENEAELKKARSEHEKLRSKLEKIEKKLIVGGENLLEKVEEQAKLLEVNNKELEQSKFQEAHLRTQLEERTAVKVEIEERYSSLQEEAFVKSKKIKKVSNELKDARAELKDLEEDHQRQVEAMLDDIRQLRKELLLNIAIIDEYIPVEHVELIEKYVSWSEEHGDWQLKAIAYTGNNMRASAPPAKKEFSNNNQTVPMYYSYRADLGASTAEHRPRTSSKKHRASIRLQQLLT.

The Kinesin motor domain occupies 6–331 (KVKVVVRCRP…LRYANRAKNI (326 aa)). 91 to 98 (GQTGTGKT) is a binding site for ATP. The stretch at 342-552 (KDAQLRKFQL…LRKELLLNIA (211 aa)) forms a coiled coil. The segment at 525 to 550 (LEEDHQRQVEAMLDDIRQLRKELLLN) is interaction with klp-11. The tract at residues 623 to 646 (TAEHRPRTSSKKHRASIRLQQLLT) is disordered. The segment covering 629-638 (RTSSKKHRAS) has biased composition (basic residues).

This sequence belongs to the TRAFAC class myosin-kinesin ATPase superfamily. Kinesin family. Kinesin II subfamily. As to quaternary structure, component of the kinesin II motor complex, a heterotrimeric complex composed of kap-1, klp-11 and klp-20. Interacts (via C-terminus) with klp-11 (via C-terminus) to form a heterodimer. Furthermore, within the heterodimer, the C-termini of klp-20 and klp-11 interact to form a coiled coil (stalk) or tail domain, and this is necessary for association with kap-1, and kinesin II motor complex activity upon IFT cargo binding. Prior to cargo binding, the klp-11/klp-20 heterodimer is autoinhibited by the tail domain of the heterodimer, which folds onto the kinesin motor domain. Cargo binding to the heterodimer relieves the autoinhibition, and allows for an extended conformation of the tail domain, and function of the heterodimer.

The protein resides in the cell projection. The protein localises to the cilium. Its subcellular location is the cytoplasm. It is found in the cytoskeleton. Component of the kinesin II motor complex (composed of kap-1 and the heterodimeric motor proteins klp-11 and klp-20) which is required for intraflagellar transport (IFT). Heterodimerizes with klp-11 to form a 'processive' molecular motor upon IFT cargo binding, which, within the kinesin II motor complex, binds to and moves along microtubules in a unidirectional manner (without dissociation of the heterodimer), and in turn, is responsible for the IFT of cargo. Specifically, the kinesin II motor complex, together with the kinesin motor protein osm-3 moves along microtubules and is required for anterograde IFT along the middle segment of the sensory neuron cilia. In particular, the kinesin II motor complex delivers specific ciliary cargo proteins such as che-3 which are related to motility to ciliary tips. This is likely mediated by IFT complexes A and B. In Caenorhabditis elegans, this protein is Kinesin-like protein klp-20.